The sequence spans 134 residues: Small ribosomal subunit protein bS16 (134 aa).

The segment at 81–134 (LAKRPARSNPKKAEPGKKAQERLAAARQAEEEAKAAAEAAAAAPAEAPAEEAAS) is disordered. Basic and acidic residues predominate over residues 91-101 (KKAEPGKKAQE). Residues 116-134 (AAEAAAAAPAEAPAEEAAS) are compositionally biased toward low complexity.

This sequence belongs to the bacterial ribosomal protein bS16 family.

In Chelativorans sp. (strain BNC1), this protein is Small ribosomal subunit protein bS16.